Consider the following 354-residue polypeptide: Guanine nucleotide-binding protein G(i) subunit alpha-1 (354 aa).

Glycine 2 carries N-myristoyl glycine lipidation. Residue cysteine 3 is the site of S-palmitoyl cysteine attachment. A G-alpha domain is found at 32-354 (REVKLLLLGA…KNNLKDCGLF (323 aa)). A G1 motif region spans residues 35–48 (KLLLLGAGESGKST). Residues 43 to 48 (ESGKST), 150 to 151 (DS), and 175 to 178 (LRTR) contribute to the GTP site. Serine 47 serves as a coordination point for Mg(2+). A G2 motif region spans residues 173–181 (DVLRTRVKT). Threonine 181 contacts Mg(2+). The tract at residues 196-205 (FKMFDVGGQR) is G3 motif. GTP is bound by residues 200-204 (DVGGQ), 269-272 (NKKD), and alanine 326. Residues 265–272 (ILFLNKKD) are G4 motif. The segment at 324-329 (TCATDT) is G5 motif.

This sequence belongs to the G-alpha family. G(i/o/t/z) subfamily. In terms of assembly, heterotrimeric G proteins are composed of 3 units; alpha, beta and gamma. The alpha chain contains the guanine nucleotide binding site. Part of a spindle orientation complex. Identified in complex with the beta subunit GNB1 and the gamma subunit GNG1. Identified in complex with the beta subunit GNB1 and the gamma subunit GNG2. GTP binding causes dissociation of the heterotrimer, liberating the individual subunits so that they can interact with downstream effector proteins. Post-translationally, myristoylation at Gly-2 is required for membrane anchoring before palmitoylation. Palmitoylation at Cys-3 varies with membrane lipid composition.

Its subcellular location is the nucleus. It localises to the cytoplasm. The protein localises to the cell membrane. It is found in the cytoskeleton. The protein resides in the microtubule organizing center. Its subcellular location is the centrosome. It localises to the cell cortex. The protein localises to the membrane. It catalyses the reaction GTP + H2O = GDP + phosphate + H(+). Guanine nucleotide-binding proteins (G proteins) function as transducers downstream of G protein-coupled receptors (GPCRs) in numerous signaling cascades. The alpha chain contains the guanine nucleotide binding site and alternates between an active, GTP-bound state and an inactive, GDP-bound state. Signaling by an activated GPCR promotes GDP release and GTP binding. The alpha subunit has a low GTPase activity that converts bound GTP to GDP, thereby terminating the signal. Both GDP release and GTP hydrolysis are modulated by numerous regulatory proteins. Signaling is mediated via effector proteins, such as adenylate cyclase. Inhibits adenylate cyclase activity, leading to decreased intracellular cAMP levels. Required for cortical dynein-dynactin complex recruitment during metaphase. This is Guanine nucleotide-binding protein G(i) subunit alpha-1 (gnai1) from Xenopus laevis (African clawed frog).